The following is a 254-amino-acid chain: Adenosine 5'-phosphosulfate reductase (254 aa).

[4Fe-4S] cluster is bound by residues cysteine 131, cysteine 132, cysteine 212, and cysteine 215. Cysteine 238 acts as the Nucleophile; cysteine thiosulfonate intermediate in catalysis.

This sequence belongs to the PAPS reductase family. CysH subfamily. Requires [4Fe-4S] cluster as cofactor.

It localises to the cytoplasm. It catalyses the reaction [thioredoxin]-disulfide + sulfite + AMP + 2 H(+) = adenosine 5'-phosphosulfate + [thioredoxin]-dithiol. It participates in sulfur metabolism; hydrogen sulfide biosynthesis; sulfite from sulfate. Its function is as follows. Catalyzes the formation of sulfite from adenosine 5'-phosphosulfate (APS) using thioredoxin as an electron donor. This is Adenosine 5'-phosphosulfate reductase from Mesorhizobium japonicum (strain LMG 29417 / CECT 9101 / MAFF 303099) (Mesorhizobium loti (strain MAFF 303099)).